Consider the following 309-residue polypeptide: HPr kinase/phosphorylase (309 aa).

Residues His-138 and Lys-159 contribute to the active site. Gly-153–Ser-160 lines the ATP pocket. Residue Ser-160 participates in Mg(2+) binding. Asp-177 (proton acceptor; for phosphorylation activity. Proton donor; for dephosphorylation activity) is an active-site residue. The interval Leu-201–Asn-210 is important for the catalytic mechanism of both phosphorylation and dephosphorylation. Position 202 (Glu-202) interacts with Mg(2+). Arg-243 is a catalytic residue. An important for the catalytic mechanism of dephosphorylation region spans residues Pro-264 to Arg-269.

It belongs to the HPrK/P family. In terms of assembly, homohexamer. Mg(2+) serves as cofactor.

It catalyses the reaction [HPr protein]-L-serine + ATP = [HPr protein]-O-phospho-L-serine + ADP + H(+). It carries out the reaction [HPr protein]-O-phospho-L-serine + phosphate + H(+) = [HPr protein]-L-serine + diphosphate. In terms of biological role, catalyzes the ATP- as well as the pyrophosphate-dependent phosphorylation of a specific serine residue in HPr, a phosphocarrier protein of the phosphoenolpyruvate-dependent sugar phosphotransferase system (PTS). HprK/P also catalyzes the pyrophosphate-producing, inorganic phosphate-dependent dephosphorylation (phosphorolysis) of seryl-phosphorylated HPr (P-Ser-HPr). The two antagonistic activities of HprK/P are regulated by several intracellular metabolites, which change their concentration in response to the absence or presence of rapidly metabolisable carbon sources (glucose, fructose, etc.) in the growth medium. Also phosphorylates/dephosphorylates the HPr-like catabolite repression protein crh on a specific serine residue. Therefore, by controlling the phosphorylation state of HPr and crh, HPrK/P is a sensor enzyme that plays a major role in the regulation of carbon metabolism and sugar transport: it mediates carbon catabolite repression (CCR), and regulates PTS-catalyzed carbohydrate uptake and inducer exclusion. The chain is HPr kinase/phosphorylase from Bacillus cereus (strain G9842).